Here is a 98-residue protein sequence, read N- to C-terminus: UPF0473 protein GTNG_2486 (98 aa).

The protein belongs to the UPF0473 family.

This is UPF0473 protein GTNG_2486 from Geobacillus thermodenitrificans (strain NG80-2).